A 558-amino-acid polypeptide reads, in one-letter code: Zinc finger protein piragua (558 aa).

Positions 15–94 (STCRLCHHNT…QEREQSLQEQ (80 aa)) constitute a ZAD domain. Zn(2+) is bound by residues Cys17, Cys20, Cys67, and Cys70. Positions 132-177 (LAESSEEEFALGSDGEYENYDDDDEEEEEDYDEEDEEDGQNGEDVD) are enriched in acidic residues. Residues 132 to 178 (LAESSEEEFALGSDGEYENYDDDDEEEEEDYDEEDEEDGQNGEDVDM) form a disordered region. C2H2-type zinc fingers lie at residues 208 to 231 (FLCQ…LAAH), 237 to 260 (YCCN…KTLH), 266 to 288 (YVCA…TIVH), 294 to 316 (FTCN…MRIH), 322 to 344 (FVCQ…TRSH), 350 to 372 (FQCG…QQVH), 414 to 436 (YHCD…QALH), 441 to 464 (FACK…LEAH), and 468 to 490 (FTCG…LKVH).

In terms of biological role, may be involved in transcriptional regulation. The function of this protein is unclear. According to one report, it is required for development and viability since mutants display defects in several developmental morphogenetic processes including dorsal closure and head involution, and die by the first instar larval stage. It may also be involved in fwe-mediated cellular competition. However, according to another report, it is not required for development or viability since mutants have no visible phenotype and are fertile. This Drosophila melanogaster (Fruit fly) protein is Zinc finger protein piragua.